Here is a 226-residue protein sequence, read N- to C-terminus: GTP-binding nuclear protein Ran (226 aa).

Residues 3 to 184 form the Small GTPase Ran-type domain; the sequence is DPISFKVILV…LSILRTLLND (182 aa). 14 to 21 provides a ligand contact to GTP; it reads DGATGKTT. Residues 33–41 form a switch-I region; sequence KQYISTIGV. GTP is bound by residues Gly70, 135–138, and 163–165; these read NKCD and SAK. The interval 70-86 is switch-II; the sequence is GQEKFGGLRDGYYVDSD.

Belongs to the small GTPase superfamily. Ran family. Found in a nuclear export complex with RanGTP, exportin and pre-miRNA.

The protein resides in the nucleus. GTP-binding protein involved in nucleocytoplasmic transport. Required for the import of protein into the nucleus and also for RNA export. Involved in chromatin condensation and control of cell cycle. The chain is GTP-binding nuclear protein Ran from Giardia intestinalis (Giardia lamblia).